Here is a 239-residue protein sequence, read N- to C-terminus: uncharacterized protein (239 aa).

The region spanning 1 to 65 (MRLDKLLANS…DYREFIYLMM (65 aa)) is the S4 RNA-binding domain. Catalysis depends on aspartate 103, which acts as the Nucleophile.

Belongs to the pseudouridine synthase RsuA family.

The enzyme catalyses a uridine in RNA = a pseudouridine in RNA. This is an uncharacterized protein from Bacillus subtilis (strain 168).